We begin with the raw amino-acid sequence, 581 residues long: ATP-dependent lipid A-core flippase (581 aa).

5 consecutive transmembrane segments (helical) span residues 27-47 (VFLAVIGMVGTAATEPVFPAI), 63-83 (MVWLIPMGIVTLFLVRSVIVY), 154-174 (IALIGYLLYLDWKLTLITLAI), 251-271 (MTPITHIAASVAVAIIAFLAL), and 279-299 (GASAGSFISFITAMLMLISPV). The region spanning 28–311 (FLAVIGMVGT…LATVNPTIQR (284 aa)) is the ABC transmembrane type-1 domain. One can recognise an ABC transporter domain in the interval 343–579 (ICFDNVSLRY…GSYYANLSRL (237 aa)). Residue 377–384 (GASGGGKS) coordinates ATP.

This sequence belongs to the ABC transporter superfamily. Lipid exporter (TC 3.A.1.106) family. In terms of assembly, homodimer.

Its subcellular location is the cell inner membrane. The enzyme catalyses ATP + H2O + lipid A-core oligosaccharideSide 1 = ADP + phosphate + lipid A-core oligosaccharideSide 2.. Its function is as follows. Involved in lipopolysaccharide (LPS) biosynthesis. Translocates lipid A-core from the inner to the outer leaflet of the inner membrane. Transmembrane domains (TMD) form a pore in the inner membrane and the ATP-binding domain (NBD) is responsible for energy generation. The polypeptide is ATP-dependent lipid A-core flippase (Albidiferax ferrireducens (strain ATCC BAA-621 / DSM 15236 / T118) (Rhodoferax ferrireducens)).